Reading from the N-terminus, the 82-residue chain is Delta-conotoxin-like SmVIA (82 aa).

Positions 1-22 (MKLTCVMIVAVLFLIAWTFVTA) are cleaved as a signal peptide. Positions 23 to 49 (DDSRNGLKNLFPKARHEMKNPEASKLN) are excised as a propeptide. Intrachain disulfides connect Cys54–Cys69, Cys61–Cys73, and Cys68–Cys77. Position 65 is a 4-hydroxyproline (Pro65).

This sequence belongs to the conotoxin O1 superfamily. As to expression, expressed by the venom duct.

It localises to the secreted. Delta-conotoxins bind to site 6 of voltage-gated sodium channels (Nav) and inhibit the inactivation process. The protein is Delta-conotoxin-like SmVIA of Conus stercusmuscarum (Fly-specked cone).